The following is a 259-amino-acid chain: Type III pantothenate kinase (259 aa).

Position 6-13 (6-13 (DCGNTNTV)) interacts with ATP. Substrate is bound at residue 107–110 (GPDR). The Proton acceptor role is filled by Asp109. Residue Asp129 coordinates K(+). An ATP-binding site is contributed by Thr132. A substrate-binding site is contributed by Thr184.

This sequence belongs to the type III pantothenate kinase family. Homodimer. The cofactor is NH4(+). It depends on K(+) as a cofactor.

The protein resides in the cytoplasm. The catalysed reaction is (R)-pantothenate + ATP = (R)-4'-phosphopantothenate + ADP + H(+). The protein operates within cofactor biosynthesis; coenzyme A biosynthesis; CoA from (R)-pantothenate: step 1/5. Catalyzes the phosphorylation of pantothenate (Pan), the first step in CoA biosynthesis. In Jannaschia sp. (strain CCS1), this protein is Type III pantothenate kinase.